Here is a 60-residue protein sequence, read N- to C-terminus: Metallothionein-like protein EMB30 (60 aa).

Belongs to the metallothionein superfamily. Type 15 family.

In terms of biological role, metallothioneins have a high content of cysteine residues that bind various heavy metals. This Picea glauca (White spruce) protein is Metallothionein-like protein EMB30 (EMB30).